The primary structure comprises 350 residues: Secreted effector protein PipB2 (350 aa).

Pentapeptide repeat domains follow at residues 162 to 201 (ANLTSENLCDADLSGANLEGAVLFMADCEGANFKGANLSG), 202 to 241 (TSLGDSNFKNACLEDSIMCGATLDHANLTGANLQHASLLG), 247 to 286 (CNCSGANMDHTNLSGATLIRADMSGATLQGATIMAAIMEG), and 287 to 326 (AVLTRANLRKASFISTNLDGADLAEANLNNTCFKDCTLTD).

In terms of assembly, interacts with the host kinesin light chain (KLC), a subunit of the kinesin-1 motor complex.

It is found in the secreted. The protein resides in the host membrane. In terms of biological role, effector proteins function to alter host cell physiology and promote bacterial survival in host tissues. Involved in the reorganization of late endosome/lysosome (LE/Lys) compartments in mammalian cells. Necessary and sufficient to link kinesin-1 onto the Salmonella-containing vacuole (SCV) membrane. Required for centrifugal extension of lysosomal glycoprotein-rich membrane tubules, known as Salmonella-induced filaments (Sifs), away from the SCV and toward the cell periphery. Required for virulence, but not for intracellular survival and replication in phagocytic cells. The protein is Secreted effector protein PipB2 (pipB2) of Salmonella typhimurium (strain LT2 / SGSC1412 / ATCC 700720).